Consider the following 219-residue polypeptide: Glutathione S-transferase-like protein LUC7 (219 aa).

Residues 3–84 (PFGRLYSFMP…YLAQSGPYSE (82 aa)) enclose the GST N-terminal domain. One can recognise a GST C-terminal domain in the interval 90 to 219 (DAATSAKIRQ…NLIDVKRVHE (130 aa)).

The protein belongs to the GST superfamily.

Its function is as follows. Glutathione S-transferase-like protein; part of the gene cluster that mediates the biosynthesis of the mycotoxin lucilactaene and the lucilactaene-related compound NG-391 that act as cell cycle inhibitors with potent growth inhibitory activity against malarial parasites, moderate growth inhibitory activity against cancer cells, and no activity against bacteria and fungi. Within the cluster, LUC7 and LUC8 encode proteins which are not commonly involved in the biosynthesis of secondary metabolites and are not essential for lucilactaene biosynthesis. The chain is Glutathione S-transferase-like protein LUC7 from Fusarium sp.